A 552-amino-acid polypeptide reads, in one-letter code: MSVTFKDDVHRILKFVANCNGRFEDSKCDIRESPLGGLGVFAKTDIAEGESILTLNKSSIFSASNSSIANLLCDSSIDGMLALNIAFIYETTVFRNSSHWYPFLRTIRIRDDEGHLNLPPSFWHADAKRLLKGTSFDTLFDSLAPEEEIMEGFEIAVDLAHKWNDEFGLEIPKGFLDVSEENHEEDYNLKLEKFISVAYTLSSRGFEIDAYHETALVPIADLFNHHVSDPDLKFVSLYDVCDKCGEPDMCKHLIAEEYLEAENLDKNMPKVASMETRVIDEDLIKSLENDLEKEYSNVTANIEDDDGGIENPDECVDLVLKNDVAQGQEIFNSYGELSNVFLLARYGFTVPENQYDIVHLGPDFMKILKKEEKYQEKVKWWSQVGHGLFSAWYAQMRQEDEEDEDGQAKSDNLSDDIESEEEEEEEEGDDSLESWLSQLYIDSSGEPSPSTWALANLLTLTAVQWESLFSKKATPHISDSIVNEEKLPFLAKKDNPHSKKLLSNLLKEKQLPCIKGDNSSKITSATKSMLQNARTLVQSEHNILDRCLKRLS.

The 310-residue stretch at 26–335 (SKCDIRESPL…QGQEIFNSYG (310 aa)) folds into the SET domain. Residue Y334 coordinates S-adenosyl-L-methionine. Positions 399-432 (EDEEDEDGQAKSDNLSDDIESEEEEEEEEGDDSL) are disordered. Positions 413–432 (LSDDIESEEEEEEEEGDDSL) are enriched in acidic residues.

Belongs to the class V-like SAM-binding methyltransferase superfamily.

It localises to the nucleus. Functionally, S-adenosyl-L-methionine-dependent protein-lysine N-methyltransferase that monomethylates 60S ribosomal protein L42 (RPL42A and RPL42B) at 'Lys-40'. The protein is Ribosomal lysine N-methyltransferase 3 of Saccharomyces cerevisiae (strain ATCC 204508 / S288c) (Baker's yeast).